The following is a 205-amino-acid chain: Glycerol-3-phosphate acyltransferase (205 aa).

5 consecutive transmembrane segments (helical) span residues S6–V26, K55–V75, V89–V109, I120–A140, and A162–I182.

Belongs to the PlsY family. As to quaternary structure, probably interacts with PlsX.

It localises to the cell inner membrane. It carries out the reaction an acyl phosphate + sn-glycerol 3-phosphate = a 1-acyl-sn-glycero-3-phosphate + phosphate. It functions in the pathway lipid metabolism; phospholipid metabolism. Its function is as follows. Catalyzes the transfer of an acyl group from acyl-phosphate (acyl-PO(4)) to glycerol-3-phosphate (G3P) to form lysophosphatidic acid (LPA). This enzyme utilizes acyl-phosphate as fatty acyl donor, but not acyl-CoA or acyl-ACP. The sequence is that of Glycerol-3-phosphate acyltransferase from Herminiimonas arsenicoxydans.